We begin with the raw amino-acid sequence, 411 residues long: Secretion apparatus protein BsaZ (411 aa).

4 consecutive transmembrane segments (helical) span residues 28–48 (IVALIVIATGALAAPALVDLT), 80–100 (IAAPFVLLCAAAGALPSLVQS), 137–157 (ALLYVGVFALTVRVFADLYHA), and 175–195 (IVLTVRLVLLFLLCALPVLIL). The segment at 341 to 411 (AANRGGPPPE…APARTGDQNA (71 aa)) is disordered. The span at 370–404 (DACADNAFPDDAPPGAAAPNAGSPDGPAPDGGAPA) shows a compositional bias: low complexity.

It belongs to the type III secretion exporter family.

The protein localises to the cell membrane. In terms of biological role, part of the bsa type III secretion system, is involved in the intracellular replication of invading bacteria inside the host cell. Probably necessary for the lysis of the vacuole membrane and escape into the host cell cytoplasm. The polypeptide is Secretion apparatus protein BsaZ (bsaZ) (Burkholderia pseudomallei (strain K96243)).